The chain runs to 250 residues: Triosephosphate isomerase (250 aa).

9 to 11 (NWK) provides a ligand contact to substrate. H95 serves as the catalytic Electrophile. Residue E167 is the Proton acceptor of the active site. Substrate is bound by residues G173, S213, and 234 to 235 (GG).

The protein belongs to the triosephosphate isomerase family. As to quaternary structure, homodimer.

Its subcellular location is the cytoplasm. The enzyme catalyses D-glyceraldehyde 3-phosphate = dihydroxyacetone phosphate. It participates in carbohydrate biosynthesis; gluconeogenesis. It functions in the pathway carbohydrate degradation; glycolysis; D-glyceraldehyde 3-phosphate from glycerone phosphate: step 1/1. Its function is as follows. Involved in the gluconeogenesis. Catalyzes stereospecifically the conversion of dihydroxyacetone phosphate (DHAP) to D-glyceraldehyde-3-phosphate (G3P). The sequence is that of Triosephosphate isomerase from Exiguobacterium sibiricum (strain DSM 17290 / CCUG 55495 / CIP 109462 / JCM 13490 / 255-15).